The primary structure comprises 172 residues: Cold-inducible RNA-binding protein (172 aa).

Positions 6–84 (GKLFVGGLSF…RQIRVDQAGK (79 aa)) constitute an RRM domain. Positions 69–172 (GKSVDGRQIR…SYDSYATHNE (104 aa)) are disordered. Composition is skewed to gly residues over residues 93 to 106 (YRGG…FFRG) and 114 to 125 (FSRGGGDRGYGG). Serine 130, serine 138, serine 146, serine 156, serine 159, and serine 163 each carry phosphoserine. Residues 138 to 172 (SRDYYSSRSQSGGYSDRSSGGSYRDSYDSYATHNE) are compositionally biased toward low complexity.

Interacts with EIF4G1. Associates with ribosomes. Post-translationally, methylated on arginine residues. Methylation of the RGG motifs is a prerequisite for recruitment into SGs. In terms of processing, phosphorylated by CK2, GSK3A and GSK3B. Phosphorylation by GSK3B increases RNA-binding activity to the TXN 3'-UTR transcript upon exposure to UV radiation.

It localises to the nucleus. It is found in the nucleoplasm. Its subcellular location is the cytoplasm. Functionally, cold-inducible mRNA binding protein that plays a protective role in the genotoxic stress response by stabilizing transcripts of genes involved in cell survival. Acts as a translational activator. Seems to play an essential role in cold-induced suppression of cell proliferation. Binds specifically to the 3'-untranslated regions (3'-UTRs) of stress-responsive transcripts RPA2 and TXN. Acts as a translational repressor. Promotes assembly of stress granules (SGs), when overexpressed. The sequence is that of Cold-inducible RNA-binding protein (CIRBP) from Pongo abelii (Sumatran orangutan).